The sequence spans 490 residues: Bifunctional protein HldE (490 aa).

Residues methionine 1–alanine 330 form a ribokinase region. Asparagine 205 to glutamate 208 is a binding site for ATP. Residue aspartate 275 is part of the active site. The interval phenylalanine 358–arginine 490 is cytidylyltransferase.

This sequence in the N-terminal section; belongs to the carbohydrate kinase PfkB family. In the C-terminal section; belongs to the cytidylyltransferase family. Homodimer.

It carries out the reaction D-glycero-beta-D-manno-heptose 7-phosphate + ATP = D-glycero-beta-D-manno-heptose 1,7-bisphosphate + ADP + H(+). The enzyme catalyses D-glycero-beta-D-manno-heptose 1-phosphate + ATP + H(+) = ADP-D-glycero-beta-D-manno-heptose + diphosphate. It functions in the pathway nucleotide-sugar biosynthesis; ADP-L-glycero-beta-D-manno-heptose biosynthesis; ADP-L-glycero-beta-D-manno-heptose from D-glycero-beta-D-manno-heptose 7-phosphate: step 1/4. The protein operates within nucleotide-sugar biosynthesis; ADP-L-glycero-beta-D-manno-heptose biosynthesis; ADP-L-glycero-beta-D-manno-heptose from D-glycero-beta-D-manno-heptose 7-phosphate: step 3/4. Its function is as follows. Catalyzes the phosphorylation of D-glycero-D-manno-heptose 7-phosphate at the C-1 position to selectively form D-glycero-beta-D-manno-heptose-1,7-bisphosphate. Catalyzes the ADP transfer from ATP to D-glycero-beta-D-manno-heptose 1-phosphate, yielding ADP-D-glycero-beta-D-manno-heptose. In Bradyrhizobium sp. (strain ORS 278), this protein is Bifunctional protein HldE.